The following is a 418-amino-acid chain: ADP-ribose glycohydrolase MACROD2 (418 aa).

A Macro domain is found at 57–238; that stretch reads PEEIQVKNSL…IYKRKLNEFF (182 aa). Substrate contacts are provided by residues 75–77, 88–90, 95–100, 183–189, and phenylalanine 222; these read GDI, AAN, GGGGVD, and ISTGIYG. Positions 238 to 418 are disordered; the sequence is FPKDGGDDEE…KDTNDDANEA (181 aa). Residues 250–262 are compositionally biased toward basic and acidic residues; that stretch reads KGDSDEMKEDTEG. Over residues 295–318 the composition is skewed to polar residues; it reads TGNTQDMTAMSLETNEGNDVSSPA. The span at 321–360 shows a compositional bias: basic and acidic residues; the sequence is PLKEGEELSEAKITGEKISVEPKTPEPEDAKMTVEEKSQE. Acidic residues predominate over residues 377–389; it reads ETEDLDGDSEEPS.

It belongs to the MacroD-type family. MacroD1/2-like subfamily.

The protein resides in the nucleus. The enzyme catalyses 2''-O-acetyl-ADP-D-ribose + H2O = ADP-D-ribose + acetate + H(+). It carries out the reaction 4-O-(ADP-D-ribosyl)-L-aspartyl-[protein] + H2O = L-aspartyl-[protein] + ADP-D-ribose + H(+). It catalyses the reaction 5-O-(ADP-D-ribosyl)-L-glutamyl-[protein] + H2O = L-glutamyl-[protein] + ADP-D-ribose + H(+). The catalysed reaction is alpha-NAD(+) + H2O = ADP-D-ribose + nicotinamide + H(+). Its activity is regulated as follows. Subject to product inhibition by ADP-ribose. In terms of biological role, removes ADP-ribose from aspartate and glutamate residues in proteins bearing a single ADP-ribose moiety. Inactive towards proteins bearing poly-ADP-ribose. Deacetylates O-acetyl-ADP ribose, a signaling molecule generated by the deacetylation of acetylated lysine residues in histones and other proteins. The sequence is that of ADP-ribose glycohydrolase MACROD2 from Xenopus laevis (African clawed frog).